We begin with the raw amino-acid sequence, 221 residues long: Orotate phosphoribosyltransferase (221 aa).

A 5-phospho-alpha-D-ribose 1-diphosphate-binding site is contributed by lysine 27. 35-36 (FF) contacts orotate. Residues 75–76 (YK), arginine 102, lysine 103, lysine 106, histidine 108, and 128–136 (DDVLTAGTA) contribute to the 5-phospho-alpha-D-ribose 1-diphosphate site. Positions 132 and 160 each coordinate orotate.

It belongs to the purine/pyrimidine phosphoribosyltransferase family. PyrE subfamily. As to quaternary structure, homodimer. Requires Mg(2+) as cofactor.

The enzyme catalyses orotidine 5'-phosphate + diphosphate = orotate + 5-phospho-alpha-D-ribose 1-diphosphate. The protein operates within pyrimidine metabolism; UMP biosynthesis via de novo pathway; UMP from orotate: step 1/2. In terms of biological role, catalyzes the transfer of a ribosyl phosphate group from 5-phosphoribose 1-diphosphate to orotate, leading to the formation of orotidine monophosphate (OMP). The protein is Orotate phosphoribosyltransferase of Dichelobacter nodosus (strain VCS1703A).